The following is a 200-amino-acid chain: Cysteine dioxygenase type 1 (200 aa).

Fe cation is bound by residues H86, H88, and H140. Positions 93–157 (CFLKMLQGNL…TEPAVSLHLY (65 aa)) form a cross-link, 3'-(S-cysteinyl)-tyrosine (Cys-Tyr).

The protein belongs to the cysteine dioxygenase family. As to quaternary structure, monomer. It depends on Fe cation as a cofactor. Requires Ni(2+) as cofactor. The cofactor is Zn(2+). Post-translationally, the thioether cross-link between Cys-93 and Tyr-157 plays a structural role through stabilizing the Fe(2+) ion, and prevents the production of highly damaging free hydroxyl radicals by holding the oxygen radical via hydroxyl hydrogen.

The enzyme catalyses L-cysteine + O2 = 3-sulfino-L-alanine + H(+). Its pathway is organosulfur biosynthesis; taurine biosynthesis; hypotaurine from L-cysteine: step 1/2. Functionally, catalyzes the oxidation of cysteine to cysteine sulfinic acid with addition of molecular dioxygen. The polypeptide is Cysteine dioxygenase type 1 (CDO1) (Bos taurus (Bovine)).